We begin with the raw amino-acid sequence, 428 residues long: Putative FBD-associated F-box protein At5g56390 (428 aa).

Residues 2–50 (DKISQLHDELLLGILSLLPNAKDVVATMVLSKRWRYLWMMVPSLVYDDS) form the F-box domain. One can recognise an FBD domain in the interval 344–394 (CWNETSLVPEYLLPSLETFEWVDYEGTKTEKQVVAFILRIASCLKQATIVS).

This is Putative FBD-associated F-box protein At5g56390 from Arabidopsis thaliana (Mouse-ear cress).